The following is a 94-amino-acid chain: Co-chaperonin GroES (94 aa).

Belongs to the GroES chaperonin family. As to quaternary structure, heptamer of 7 subunits arranged in a ring. Interacts with the chaperonin GroEL.

The protein localises to the cytoplasm. In terms of biological role, together with the chaperonin GroEL, plays an essential role in assisting protein folding. The GroEL-GroES system forms a nano-cage that allows encapsulation of the non-native substrate proteins and provides a physical environment optimized to promote and accelerate protein folding. GroES binds to the apical surface of the GroEL ring, thereby capping the opening of the GroEL channel. The protein is Co-chaperonin GroES of Bacillus cereus (strain ZK / E33L).